A 642-amino-acid chain; its full sequence is 2-oxoacid:ferredoxin oxidoreductase 2, subunit alpha (642 aa).

The short motif at 263–267 is the YPITP motif element; it reads YPITP. Thr266 and Arg356 together coordinate substrate.

In terms of assembly, heterodimer composed of an alpha and a beta subunit.

It carries out the reaction a 2-oxocarboxylate + 2 oxidized [2Fe-2S]-[ferredoxin] + CoA = an acyl-CoA + 2 reduced [2Fe-2S]-[ferredoxin] + CO2 + H(+). In terms of biological role, catalyzes the coenzyme A-dependent oxidative decarboxylation of different 2-oxoacids such as pyruvate, 2-oxobutyrate, glyoxylate and 2-oxoglutarate to form their CoA derivatives. The polypeptide is 2-oxoacid:ferredoxin oxidoreductase 2, subunit alpha (Aeropyrum pernix (strain ATCC 700893 / DSM 11879 / JCM 9820 / NBRC 100138 / K1)).